We begin with the raw amino-acid sequence, 699 residues long: MARKTPIERYRNIGICAHVDAGKTTTTERVLFYTGLSHKIGEVHDGAATMDWMEQEQERGITITSAATTCFWAGMQQQFDQHRVNIIDTPGHVDFTIEVERSLRVLDGAVVVLCGSSGVQPQTETVWRQANKYEVPRMVFVNKMDRAGANFERVVKQLKDRLGATPVPLQMTIGAEDEFKGVVDLVKMKSIIWNEADQGMTFEYQEIPADLQEKCAKLREQLVEAAAEANDDYMNKYLEEGELTEEEIKAGIRARTLANEIVPVLGGSAFKNKGVQAVLDAVIEYLPSPTEVKAIEGILDDGETVAVRKSDDNEPFSALAFKIATDPFVGTLTFIRVYSGVLESGTGVYNPVKSKKERIGRMVQMHSNNREEIKEVRAGDIAAMIGLKDVTTGDTLCDPNNIITLERMEFPDPVISVAVEPKSKADQEKMGIALGKLAQEDPSFRVKTDEETGQTIISGMGELHLDIIVDRMRREFKVEANIGKPQVAYREAIRNTCEIEGKFVRQSGGRGQYGHVWIKFEPRAEGEGLEFVNEIVGGVVPKEYVPAIQKGIEEQMQNGILAGYPLLALKATVFDGSYHDVDSNEMAFKIAASMATKQLAGKGGAVLLEPIMKVEVVTPEENMGDVVGDLNRRRGLIQGMDESVSGKVVNAEVPLAEMFGYATDLRSATQGRATYTMEFAQYAEAPNNVAEAIISARSK.

The region spanning 8-290 is the tr-type G domain; sequence ERYRNIGICA…AVIEYLPSPT (283 aa). GTP contacts are provided by residues 17–24, 88–92, and 142–145; these read AHVDAGKT, DTPGH, and NKMD.

Belongs to the TRAFAC class translation factor GTPase superfamily. Classic translation factor GTPase family. EF-G/EF-2 subfamily.

The protein resides in the cytoplasm. Catalyzes the GTP-dependent ribosomal translocation step during translation elongation. During this step, the ribosome changes from the pre-translocational (PRE) to the post-translocational (POST) state as the newly formed A-site-bound peptidyl-tRNA and P-site-bound deacylated tRNA move to the P and E sites, respectively. Catalyzes the coordinated movement of the two tRNA molecules, the mRNA and conformational changes in the ribosome. In Hahella chejuensis (strain KCTC 2396), this protein is Elongation factor G 1.